Here is a 979-residue protein sequence, read N- to C-terminus: Putative transcription initiation factor TFIID 111 kDa subunit (979 aa).

Phosphoserine is present on serine 244.

As to quaternary structure, TFIID is composed of TATA binding protein (TBP) and a number of TBP-associated factors (TAFs).

Its subcellular location is the nucleus. Functionally, TAFs are components of the transcription factor IID (TFIID) complex that are essential for mediating regulation of RNA polymerase transcription. The protein is Putative transcription initiation factor TFIID 111 kDa subunit of Schizosaccharomyces pombe (strain 972 / ATCC 24843) (Fission yeast).